Here is a 356-residue protein sequence, read N- to C-terminus: Probable neutral protease 2 homolog ARB_04769 (356 aa).

The N-terminal stretch at 1–17 is a signal peptide; the sequence is MQFTALLAALGAPLALA. Residues 18–183 constitute a propeptide that is removed on maturation; that stretch reads ASIPAAAHNH…DDSTGVIDKR (166 aa). 2 cysteine pairs are disulfide-bonded: cysteine 191-cysteine 262 and cysteine 269-cysteine 287. An N-linked (GlcNAc...) asparagine glycan is attached at asparagine 205. Histidine 311 contacts Zn(2+). Glutamate 312 is a catalytic residue. Zn(2+) is bound by residues histidine 315 and aspartate 326.

It belongs to the peptidase M35 family. The cofactor is Zn(2+).

It is found in the secreted. The catalysed reaction is Preferential cleavage of bonds with hydrophobic residues in P1'. Also 3-Asn-|-Gln-4 and 8-Gly-|-Ser-9 bonds in insulin B chain.. Probable secreted metalloprotease that shows high activities on basic nuclear substrates such as histone and protamine. May be involved in virulence. The protein is Probable neutral protease 2 homolog ARB_04769 of Arthroderma benhamiae (strain ATCC MYA-4681 / CBS 112371) (Trichophyton mentagrophytes).